Reading from the N-terminus, the 258-residue chain is D-beta-hydroxybutyrate dehydrogenase (258 aa).

Residue 6–30 (VITGSTSGIGLAIARTLAKAGANIV) coordinates NAD(+). A substrate-binding site is contributed by Ser140. Residue Tyr153 is the Proton acceptor of the active site.

The protein belongs to the short-chain dehydrogenases/reductases (SDR) family.

It carries out the reaction (R)-3-hydroxybutanoate + NAD(+) = acetoacetate + NADH + H(+). This Rhizobium meliloti (strain 1021) (Ensifer meliloti) protein is D-beta-hydroxybutyrate dehydrogenase (bdhA).